A 162-amino-acid chain; its full sequence is Putative pre-16S rRNA nuclease (162 aa).

Belongs to the YqgF nuclease family.

The protein localises to the cytoplasm. Its function is as follows. Could be a nuclease involved in processing of the 5'-end of pre-16S rRNA. In Brucella melitensis biotype 1 (strain ATCC 23456 / CCUG 17765 / NCTC 10094 / 16M), this protein is Putative pre-16S rRNA nuclease.